The sequence spans 327 residues: METVVSGIRPTGNLHLGNYFGAIRSFLDMQHRYNCFFFIADWHSLTTHPHPDNIVRNVRTILAEYLACGIDPEKATIYVQSDVREVLELYLYLNMNAYLGELERTTSFKEKARKQPNNVNAGLLTYPTLMAADILIHRAVKVPVGKDQEQNMEMARKFARRFNTIYEVDFFPEPESFSPGATALKVPGLDGSGKMGKSEGNAIYLADDAKTISKKVMKAVTDAGPEVPNSVKPEPVENLFSMLRIVSSDEVYRHFDDLYNNCSIRYGDLKKQLAADIVAFTTPIRERILEIQADEAFLDRVVREGAERARESAARTLAEVRHIIGFR.

ATP contacts are provided by residues 9–11 (RPT) and 17–18 (GN). Residues 10–18 (PTGNLHLGN) carry the 'HIGH' region motif. L-tryptophan is bound at residue D133. ATP contacts are provided by residues 145 to 147 (GKD), V186, and 194 to 198 (KMGKS). The short motif at 194–198 (KMGKS) is the 'KMSKS' region element.

It belongs to the class-I aminoacyl-tRNA synthetase family. As to quaternary structure, homodimer.

Its subcellular location is the cytoplasm. The catalysed reaction is tRNA(Trp) + L-tryptophan + ATP = L-tryptophyl-tRNA(Trp) + AMP + diphosphate + H(+). Catalyzes the attachment of tryptophan to tRNA(Trp). The chain is Tryptophan--tRNA ligase from Porphyromonas gingivalis (strain ATCC BAA-308 / W83).